A 323-amino-acid polypeptide reads, in one-letter code: L-lactate dehydrogenase 1 (323 aa).

Residues valine 17, aspartate 38, arginine 43, tyrosine 68, and glycine 82–alanine 83 each bind NAD(+). Substrate contacts are provided by glutamine 85 and arginine 91. Residues serine 104, alanine 121–asparagine 123, and serine 146 each bind NAD(+). Substrate is bound at residue asparagine 123–aspartate 126. Aspartate 151 to arginine 154 contacts substrate. Histidine 178 serves as the catalytic Proton acceptor. Position 223 is a phosphotyrosine (tyrosine 223). Threonine 232 is a binding site for substrate.

Belongs to the LDH/MDH superfamily. LDH family. In terms of assembly, homotetramer.

The protein resides in the cytoplasm. It carries out the reaction (S)-lactate + NAD(+) = pyruvate + NADH + H(+). Its pathway is fermentation; pyruvate fermentation to lactate; (S)-lactate from pyruvate: step 1/1. In terms of biological role, catalyzes the conversion of lactate to pyruvate. The chain is L-lactate dehydrogenase 1 from Lactobacillus johnsonii (strain CNCM I-12250 / La1 / NCC 533).